A 117-amino-acid polypeptide reads, in one-letter code: Large ribosomal subunit protein bL19 (117 aa).

It belongs to the bacterial ribosomal protein bL19 family.

Its function is as follows. This protein is located at the 30S-50S ribosomal subunit interface and may play a role in the structure and function of the aminoacyl-tRNA binding site. This is Large ribosomal subunit protein bL19 from Colwellia psychrerythraea (strain 34H / ATCC BAA-681) (Vibrio psychroerythus).